Here is a 548-residue protein sequence, read N- to C-terminus: uncharacterized protein (548 aa).

A DhaL domain is found at 8 to 200; it reads KLFADMIIQG…LLCVYEGFLK (193 aa).

This is an uncharacterized protein from Staphylococcus aureus (strain bovine RF122 / ET3-1).